The sequence spans 480 residues: Aspartyl/glutamyl-tRNA(Asn/Gln) amidotransferase subunit B (480 aa).

This sequence belongs to the GatB/GatE family. GatB subfamily. As to quaternary structure, heterotrimer of A, B and C subunits.

The enzyme catalyses L-glutamyl-tRNA(Gln) + L-glutamine + ATP + H2O = L-glutaminyl-tRNA(Gln) + L-glutamate + ADP + phosphate + H(+). It catalyses the reaction L-aspartyl-tRNA(Asn) + L-glutamine + ATP + H2O = L-asparaginyl-tRNA(Asn) + L-glutamate + ADP + phosphate + 2 H(+). Allows the formation of correctly charged Asn-tRNA(Asn) or Gln-tRNA(Gln) through the transamidation of misacylated Asp-tRNA(Asn) or Glu-tRNA(Gln) in organisms which lack either or both of asparaginyl-tRNA or glutaminyl-tRNA synthetases. The reaction takes place in the presence of glutamine and ATP through an activated phospho-Asp-tRNA(Asn) or phospho-Glu-tRNA(Gln). The sequence is that of Aspartyl/glutamyl-tRNA(Asn/Gln) amidotransferase subunit B from Hahella chejuensis (strain KCTC 2396).